A 278-amino-acid polypeptide reads, in one-letter code: Pantothenate synthetase (278 aa).

ATP is bound at residue 26 to 33 (MGNLHEGH). H33 acts as the Proton donor in catalysis. A (R)-pantoate-binding site is contributed by Q57. Beta-alanine is bound at residue Q57. 144-147 (GKKD) contributes to the ATP binding site. Q150 contacts (R)-pantoate. ATP-binding positions include G173 and 181–184 (LSSR).

Belongs to the pantothenate synthetase family. In terms of assembly, homodimer.

It localises to the cytoplasm. It carries out the reaction (R)-pantoate + beta-alanine + ATP = (R)-pantothenate + AMP + diphosphate + H(+). It participates in cofactor biosynthesis; (R)-pantothenate biosynthesis; (R)-pantothenate from (R)-pantoate and beta-alanine: step 1/1. Functionally, catalyzes the condensation of pantoate with beta-alanine in an ATP-dependent reaction via a pantoyl-adenylate intermediate. In Neisseria meningitidis serogroup B (strain ATCC BAA-335 / MC58), this protein is Pantothenate synthetase.